Reading from the N-terminus, the 186-residue chain is ATP synthase subunit b' (186 aa).

Residues 39–59 (IFWLLLALGAIYWLLKNIAIP) form a helical membrane-spanning segment.

It belongs to the ATPase B chain family. In terms of assembly, F-type ATPases have 2 components, F(1) - the catalytic core - and F(0) - the membrane proton channel. F(1) has five subunits: alpha(3), beta(3), gamma(1), delta(1), epsilon(1). F(0) has four main subunits: a(1), b(1), b'(1) and c(10-14). The alpha and beta chains form an alternating ring which encloses part of the gamma chain. F(1) is attached to F(0) by a central stalk formed by the gamma and epsilon chains, while a peripheral stalk is formed by the delta, b and b' chains.

The protein localises to the cellular chromatophore membrane. In terms of biological role, f(1)F(0) ATP synthase produces ATP from ADP in the presence of a proton or sodium gradient. F-type ATPases consist of two structural domains, F(1) containing the extramembraneous catalytic core and F(0) containing the membrane proton channel, linked together by a central stalk and a peripheral stalk. During catalysis, ATP synthesis in the catalytic domain of F(1) is coupled via a rotary mechanism of the central stalk subunits to proton translocation. Functionally, component of the F(0) channel, it forms part of the peripheral stalk, linking F(1) to F(0). The b'-subunit is a diverged and duplicated form of b found in plants and photosynthetic bacteria. The chain is ATP synthase subunit b' from Rhodobacter capsulatus (Rhodopseudomonas capsulata).